Consider the following 479-residue polypeptide: RAC-gamma serine/threonine-protein kinase (479 aa).

The residue at position 2 (serine 2) is an N-acetylserine. The PH domain occupies 5 to 107 (TIVKEGWVQK…WTEAIQAVAD (103 aa)). Residues cysteine 59 and cysteine 76 are joined by a disulfide bond. Residues 148–405 (FDYLKLLGKG…AKEIMRHSFF (258 aa)) form the Protein kinase domain. Residues 154-162 (LGKGTFGKV) and lysine 177 each bind ATP. Aspartate 271 functions as the Proton acceptor in the catalytic mechanism. A disulfide bond links cysteine 293 and cysteine 307. O-linked (GlcNAc) threonine glycosylation is present at threonine 302. Threonine 305 is modified (phosphothreonine; by PDPK1). Threonine 309 is a glycosylation site (O-linked (GlcNAc) threonine). The AGC-kinase C-terminal domain occupies 406-479 (SGVNWQDVYD…QFSYSASGRE (74 aa)). Threonine 447 is modified (phosphothreonine). The segment at 458–479 (DCMDNERRPHFPQFSYSASGRE) is disordered. The residue at position 472 (serine 472) is a Phosphoserine; by PKC/PRKCZ. Serine 472 is a glycosylation site (O-linked (GlcNAc) serine; alternate).

It belongs to the protein kinase superfamily. AGC Ser/Thr protein kinase family. RAC subfamily. As to quaternary structure, interacts (via PH domain) with TCL1A; this enhances AKT3 phosphorylation and activation. Interacts with TRAF6. Interacts with KCTD20. Interacts with BTBD10. Phosphorylation on Thr-305 and Ser-472 is required for full activity. Phosphorylation of the activation loop at Thr-305 by PDPK1/PDK1 is a prerequisite for full activation. Phosphorylation at Ser-472 by mTORC2 in response to growth factors plays a key role in AKT1 activation by facilitating subsequent phosphorylation of the activation loop by PDPK1/PDK1. In terms of processing, ubiquitinated. When fully phosphorylated and translocated into the nucleus, undergoes 'Lys-48'-polyubiquitination catalyzed by TTC3, leading to its degradation by the proteasome. Post-translationally, O-GlcNAcylation at Thr-302 and Thr-309 inhibits activating phosphorylation at Thr-305 via disrupting the interaction between AKT and PDPK1/PDK1. In terms of tissue distribution, in adult tissues, it is highly expressed in brain, lung and kidney, but weakly in heart, testis and liver. In fetal tissues, it is highly expressed in heart, liver and brain and not at all in kidney.

The protein resides in the nucleus. It is found in the cytoplasm. Its subcellular location is the membrane. It carries out the reaction L-seryl-[protein] + ATP = O-phospho-L-seryl-[protein] + ADP + H(+). It catalyses the reaction L-threonyl-[protein] + ATP = O-phospho-L-threonyl-[protein] + ADP + H(+). Its activity is regulated as follows. Two specific sites, one in the kinase domain (Thr-305) and the other in the C-terminal regulatory region (Ser-472), need to be phosphorylated for its full activation. IGF-1 leads to the activation of AKT3, which may play a role in regulating cell survival. Its function is as follows. AKT3 is one of 3 closely related serine/threonine-protein kinases (AKT1, AKT2 and AKT3) called the AKT kinase, and which regulate many processes including metabolism, proliferation, cell survival, growth and angiogenesis. This is mediated through serine and/or threonine phosphorylation of a range of downstream substrates. Over 100 substrate candidates have been reported so far, but for most of them, no isoform specificity has been reported. AKT3 is the least studied AKT isoform. It plays an important role in brain development and is crucial for the viability of malignant glioma cells. AKT3 isoform may also be the key molecule in up-regulation and down-regulation of MMP13 via IL13. Required for the coordination of mitochondrial biogenesis with growth factor-induced increases in cellular energy demands. Down-regulation by RNA interference reduces the expression of the phosphorylated form of BAD, resulting in the induction of caspase-dependent apoptosis. This is RAC-gamma serine/threonine-protein kinase (AKT3) from Homo sapiens (Human).